The sequence spans 524 residues: Nuclear distribution protein PAC1 (524 aa).

A coiled-coil region spans residues 65–90 (STVLRLQRKIIDLENEVGTLRSIVDG). 8 WD repeats span residues 121-160 (QQNQ…TSIP), 166-217 (AHTR…HIRT), 220-262 (GHDH…KSFT), 277-317 (NSQL…GLAL), 353-394 (IPQE…LIPH), 415-454 (GHQS…VTGS), 463-492 (GHDG…DATE), and 493-524 (EESH…KLWS).

It belongs to the WD repeat LIS1/nudF family. In terms of assembly, self-associates. Interacts with NDL1 and dynein.

It localises to the cytoplasm. Its subcellular location is the cytoskeleton. The protein localises to the spindle pole. Its function is as follows. Positively regulates the activity of the minus-end directed microtubule motor protein dynein. Plays a central role in positioning the mitotic spindle at the bud neck during cell division. Targets cytoplasmic dynein to microtubule plus ends, thereby promoting dynein-mediated microtubule sliding along the bud cortex and consequently the movement of the mitotic spindle to the bud neck. The protein is Nuclear distribution protein PAC1 of Scheffersomyces stipitis (strain ATCC 58785 / CBS 6054 / NBRC 10063 / NRRL Y-11545) (Yeast).